The primary structure comprises 689 residues: Glycine--tRNA ligase beta subunit (689 aa).

This sequence belongs to the class-II aminoacyl-tRNA synthetase family. In terms of assembly, tetramer of two alpha and two beta subunits.

The protein resides in the cytoplasm. It carries out the reaction tRNA(Gly) + glycine + ATP = glycyl-tRNA(Gly) + AMP + diphosphate. The chain is Glycine--tRNA ligase beta subunit from Shewanella piezotolerans (strain WP3 / JCM 13877).